Here is a 547-residue protein sequence, read N- to C-terminus: Chaperonin GroEL (547 aa).

ATP-binding positions include 30–33, Lys51, 87–91, Gly415, 479–481, and Asp495; these read TLGP, DGTTT, and DAA.

This sequence belongs to the chaperonin (HSP60) family. As to quaternary structure, forms a cylinder of 14 subunits composed of two heptameric rings stacked back-to-back. Interacts with the co-chaperonin GroES.

The protein resides in the cytoplasm. The enzyme catalyses ATP + H2O + a folded polypeptide = ADP + phosphate + an unfolded polypeptide.. Together with its co-chaperonin GroES, plays an essential role in assisting protein folding. The GroEL-GroES system forms a nano-cage that allows encapsulation of the non-native substrate proteins and provides a physical environment optimized to promote and accelerate protein folding. The protein is Chaperonin GroEL of Dichelobacter nodosus (strain VCS1703A).